The chain runs to 135 residues: MSEFKRLMRLKLKMKQKRPEFKRQDWFKCSRIGTSWRRPFGKHSGMRIGLTHRAAVVNTGYRGPVLVRGLHPSGLQDILVNNVKELVALNPEVQGARIAATVGKRKRIEIVKKANELGIRVFNVSKQKQEEFLSL.

This sequence belongs to the eukaryotic ribosomal protein eL32 family.

This is Large ribosomal subunit protein eL32 (rpl32e) from Methanococcus maripaludis (strain DSM 14266 / JCM 13030 / NBRC 101832 / S2 / LL).